Reading from the N-terminus, the 305-residue chain is Oxygen-dependent coproporphyrinogen-III oxidase (305 aa).

A substrate-binding site is contributed by Ser-98. Positions 102 and 112 each coordinate a divalent metal cation. His-112 (proton donor) is an active-site residue. A substrate-binding site is contributed by 114–116 (NVR). A divalent metal cation is bound by residues His-151 and His-181. Residues 246-281 (YVEFNLVYDRGTLFGLQSGGRTESILMSMPPLARWE) form an important for dimerization region. Position 264–266 (264–266 (GGR)) interacts with substrate.

It belongs to the aerobic coproporphyrinogen-III oxidase family. In terms of assembly, homodimer. Requires a divalent metal cation as cofactor.

It localises to the cytoplasm. The catalysed reaction is coproporphyrinogen III + O2 + 2 H(+) = protoporphyrinogen IX + 2 CO2 + 2 H2O. It participates in porphyrin-containing compound metabolism; protoporphyrin-IX biosynthesis; protoporphyrinogen-IX from coproporphyrinogen-III (O2 route): step 1/1. Functionally, involved in the heme biosynthesis. Catalyzes the aerobic oxidative decarboxylation of propionate groups of rings A and B of coproporphyrinogen-III to yield the vinyl groups in protoporphyrinogen-IX. This is Oxygen-dependent coproporphyrinogen-III oxidase from Vibrio parahaemolyticus serotype O3:K6 (strain RIMD 2210633).